The chain runs to 347 residues: Intracellular hyaluronan-binding protein 4 (347 aa).

Disordered stretches follow at residues 39–221 and 298–347; these read GTEK…PSET and FGSL…PALA. Basic and acidic residues-rich tracts occupy residues 61–71, 83–107, 116–125, and 146–174; these read VKKESQRDRKT, PGHEVVEEPIQRRVTFDRKFNDAEK, RPVDVLDRPA, and DGFDQRGKREFERHSGSDRSSVRSEEKRS. Over residues 199-213 the composition is skewed to acidic residues; the sequence is EVTENEETQEAVETD. The span at 307–319 shows a compositional bias: gly residues; sequence GGRGGRGGRGRGG. The segment covering 338–347 has biased composition (acidic residues); that stretch reads DDPEDFPALA.

It belongs to the SERBP1-HABP4 family. In terms of assembly, associates with ribosomes; promoting ribosome stabilization. Interacts with eef2/eEF2; promoting ribosome stabilization.

The protein localises to the nucleus. It is found in the cytoplasm. Its subcellular location is the stress granule. The protein resides in the nucleolus. It localises to the nucleus speckle. The protein localises to the cajal body. Functionally, ribosome-binding protein that promotes ribosome hibernation, a process during which ribosomes are stabilized in an inactive state and preserved from proteasomal degradation. Acts via its association with eef2/eEF2 factor at the A-site of the ribosome, promoting ribosome stabilization in an inactive state compatible with storage. Plays a key role in ribosome hibernation in the mature egg by promoting ribosome stabilization. Ribosomes, which are produced in large quantities during oogenesis, are stored and translationally repressed in the egg and early embryo. The sequence is that of Intracellular hyaluronan-binding protein 4 from Danio rerio (Zebrafish).